The primary structure comprises 273 residues: MLHLLALALLLSLVSAAPAPGQALQRSGIIGGKEAPGSRWPWQVSLRVRDQYWRHQCGGSLIHPQWVLTAAHCIGPELQEPSDFRVQLREQHLYYQDRLLPISRVIPHPHYYMVENGADIALLQLEEPVSISRHVQPVTLPPASETFPPESQCWVTGWGDVDNGRPLPPPYPLKQVKVPIVENSVCDWKYHSGLSTDYSVPIVQEDNLCAGDGGRDSCQGDSGGPLVCKVNGTWLQAGVVSWGDGCAKPNRPGIYTRITSYLDWIHQYVPQEP.

The N-terminal stretch at 1-18 (MLHLLALALLLSLVSAAP) is a signal peptide. Positions 19–28 (APGQALQRSG) are cleaved as a propeptide — activation peptide. One can recognise a Peptidase S1 domain in the interval 29-270 (IIGGKEAPGS…YLDWIHQYVP (242 aa)). An intrachain disulfide couples cysteine 57 to cysteine 73. Active-site charge relay system residues include histidine 72 and aspartate 119. 3 cysteine pairs are disulfide-bonded: cysteine 153–cysteine 228, cysteine 186–cysteine 209, and cysteine 218–cysteine 246. The active-site Charge relay system is serine 222. Asparagine 231 is a glycosylation site (N-linked (GlcNAc...) asparagine).

Belongs to the peptidase S1 family. Tryptase subfamily. As to quaternary structure, homotetramer.

Its subcellular location is the secreted. The catalysed reaction is Preferential cleavage: Arg-|-Xaa, Lys-|-Xaa, but with more restricted specificity than trypsin.. Tryptase is the major neutral protease present in mast cells and is secreted upon the coupled activation-degranulation response of this cell type. This Ovis aries (Sheep) protein is Tryptase-2.